The primary structure comprises 117 residues: Large ribosomal subunit protein bL20c (117 aa).

The protein belongs to the bacterial ribosomal protein bL20 family.

The protein localises to the plastid. It is found in the chloroplast. Binds directly to 23S ribosomal RNA and is necessary for the in vitro assembly process of the 50S ribosomal subunit. It is not involved in the protein synthesizing functions of that subunit. This chain is Large ribosomal subunit protein bL20c, found in Platanus occidentalis (Sycamore).